The following is a 542-amino-acid chain: Chromatin structure-remodeling complex subunit rsc4 (542 aa).

The Bromo 1 domain maps to 6 to 116; it reads HNAPFDKTKF…NTANSLESKD (111 aa). Disordered regions lie at residues 114-139 and 246-327; these read SKDG…KPGT and ISSF…PIPE. Residues 119-128 are compositionally biased toward acidic residues; that stretch reads LNEEENEEME. The Bromo 2 domain maps to 139–249; that stretch reads TNEIDVPKVI…QLSSSLISSF (111 aa). Basic and acidic residues predominate over residues 252-266; that stretch reads QPKEHSPATSKHEPE. 4 positions are modified to phosphoserine: Ser-257, Ser-271, Ser-287, and Ser-313. Low complexity predominate over residues 268 to 280; that stretch reads TPASPTPSVSAST. A compositionally biased stretch (polar residues) spans 286–298; that stretch reads TSVAPSFITSDQA. Positions 304–322 are enriched in basic and acidic residues; it reads LKSEEAHVESFSKESEKDQ.

Component of the RSC complex composed of at least arp9, arp42, rsc1, rsc4, rsc7, rsc9, rsc58, sfh1, snf21, ssr1, ssr2, ssr3 and ssr4. The complex interacts with histone and histone variant components of centromeric chromatin.

It is found in the nucleus. Its function is as follows. Component of the chromatin structure remodeling complex (RSC), which is involved in transcription regulation and nucleosome positioning. Controls particularly membrane and organelle development genes. The chain is Chromatin structure-remodeling complex subunit rsc4 (rsc4) from Schizosaccharomyces pombe (strain 972 / ATCC 24843) (Fission yeast).